A 417-amino-acid polypeptide reads, in one-letter code: Cobalamin binding intrinsic factor (417 aa).

Positions 1-18 (MAWFALYLLSLLWATAGT) are cleaved as a signal peptide. Disulfide bonds link Cys26–Cys246, Cys103–Cys288, and Cys143–Cys182. Residue Asp171 participates in cob(II)alamin binding. Ser191 is subject to Phosphoserine. Cob(II)alamin-binding residues include Asp222 and Gln270. N-linked (GlcNAc...) asparagine glycans are attached at residues Asn311, Asn330, and Asn334. Cob(II)alamin is bound by residues 365-370 (SWGLVV) and 386-395 (WQFLSGVTPL). Asn413 carries an N-linked (GlcNAc...) asparagine glycan.

Belongs to the eukaryotic cobalamin transport proteins family. Interacts with CUBN (via CUB domains). Gastric mucosa.

The protein resides in the secreted. Functionally, promotes absorption of the essential vitamin cobalamin (Cbl) in the ileum. After interaction with CUBN, the CBLIF-cobalamin complex is internalized via receptor-mediated endocytosis. The protein is Cobalamin binding intrinsic factor of Homo sapiens (Human).